The following is a 141-amino-acid chain: Envelope glycoprotein L (141 aa).

The signal sequence occupies residues 1–19; it reads MKWLLGAYVCLCLANILNA. Positions 21–131 are interaction with gH; the sequence is IPNPCCNVFA…TSAIKFKSKY (111 aa).

The protein belongs to the herpesviridae glycoprotein L family. In terms of assembly, interacts with glycoprotein H (gH); this interaction is necessary for the correct processing and cell surface expression of gH. The heterodimer gH/gL seems to interact with gB trimers during fusion.

Its subcellular location is the virion membrane. It localises to the host cell membrane. The protein resides in the host Golgi apparatus. The protein localises to the host trans-Golgi network. Its function is as follows. The heterodimer glycoprotein H-glycoprotein L is required for the fusion of viral and plasma membranes leading to virus entry into the host cell. Acts as a functional inhibitor of gH and maintains gH in an inhibited form. Upon binding to host integrins, gL dissociates from gH leading to activation of the viral fusion glycoproteins gB and gH. The polypeptide is Envelope glycoprotein L (Saimiriine herpesvirus 2 (strain 11) (SaHV-2)).